The sequence spans 462 residues: Dipeptidyl peptidase 1 (462 aa).

A signal peptide spans M1–S24. 2 N-linked (GlcNAc...) asparagine glycosylation sites follow: N29 and N53. 2 cysteine pairs are disulfide-bonded: C30-C118 and C54-C136. Residues A135 to S229 constitute a propeptide that is removed on maturation. The N-linked (GlcNAc...) asparagine glycan is linked to N144. Disulfide bonds link C254–C297, C290–C330, and C320–C336. The active site involves C257. The N-linked (GlcNAc...) asparagine glycan is linked to N275. The chloride site is built by F301 and Y303. Chloride is bound at residue Y346. Active-site residues include H404 and N426.

Belongs to the peptidase C1 family. Tetramer of heterotrimers consisting of exclusion domain, heavy- and light chains. Chloride serves as cofactor. In terms of tissue distribution, broadly distributed, but higher levels found in liver, spleen, intestine, lung and kidney.

It is found in the lysosome. It catalyses the reaction Release of an N-terminal dipeptide, Xaa-Yaa-|-Zaa-, except when Xaa is Arg or Lys, or Yaa or Zaa is Pro.. Functionally, thiol protease. Has dipeptidylpeptidase activity. Active against a broad range of dipeptide substrates composed of both polar and hydrophobic amino acids. Proline cannot occupy the P1 position and arginine cannot occupy the P2 position of the substrate. Can act as both an exopeptidase and endopeptidase. Activates serine proteases such as elastase, cathepsin G and granzymes A and B. The sequence is that of Dipeptidyl peptidase 1 (Ctsc) from Rattus norvegicus (Rat).